Reading from the N-terminus, the 77-residue chain is Small ribosomal subunit protein bS16 (77 aa).

Belongs to the bacterial ribosomal protein bS16 family.

The polypeptide is Small ribosomal subunit protein bS16 (Wolinella succinogenes (strain ATCC 29543 / DSM 1740 / CCUG 13145 / JCM 31913 / LMG 7466 / NCTC 11488 / FDC 602W) (Vibrio succinogenes)).